Here is an 887-residue protein sequence, read N- to C-terminus: Exosome complex component 10 (887 aa).

Positions 1-10 (MAPPSPREHQ) are enriched in basic and acidic residues. Residues 1-23 (MAPPSPREHQSAPATSATKPDAE) form a disordered region. A Glycyl lysine isopeptide (Lys-Gly) (interchain with G-Cter in SUMO2) cross-link involves residue lysine 19. Residues 289 to 455 (HLVSSLDELV…YIYDRMRLEL (167 aa)) form the 3'-5' exonuclease domain. Aspartate 313, glutamate 315, aspartate 371, and aspartate 440 together coordinate Mg(2+). The 81-residue stretch at 503–583 (NSQQLTAFQL…QQAREMPLLK (81 aa)) folds into the HRDC domain. Residue lysine 583 forms a Glycyl lysine isopeptide (Lys-Gly) (interchain with G-Cter in SUMO1); alternate linkage. Lysine 583 participates in a covalent cross-link: Glycyl lysine isopeptide (Lys-Gly) (interchain with G-Cter in SUMO2); alternate. Residue lysine 710 forms a Glycyl lysine isopeptide (Lys-Gly) (interchain with G-Cter in SUMO2) linkage. Disordered stretches follow at residues 734-757 (KEPK…AKEE) and 777-887 (NATK…WPKR). Residues 778–796 (ATKKRERATSDLRTIEQKQ) show a composition bias toward basic and acidic residues. Residue serine 823 is modified to Phosphoserine. Glycyl lysine isopeptide (Lys-Gly) (interchain with G-Cter in SUMO2) cross-links involve residues lysine 835, lysine 861, and lysine 875.

The protein belongs to the exosome component 10/RRP6 family. As to quaternary structure, component of the RNA exosome complex. The catalytically inactive RNA exosome core complex (Exo-9) associates with the catalytic subunit EXOSC10/RRP6 (via its N-terminus). Exo-9 may associate with DIS3 to form the nucleolar exosome complex, or DIS3L to form the cytoplasmic exosome complex. The RNA exosome complex interacts with cofactors C1D/RRP47, MPHOSPH6/MPP6 and MTREX/MTR4. Interacts with MTREX; the interaction with MTREX mediates the association of MTREX with nuclear RNA exosomes. Part of the small subunit (SSU) processome, composed of more than 70 proteins and the RNA chaperone small nucleolar RNA (snoRNA) U3. Interacts with ALYREF/THOC4. Interacts with DHX36; this interaction occurs in a RNase-insensitive manner. Interacts with NRDE2. Interacts (via C-terminus) with USP36 (via C-terminus); the interaction is facilitated by the association with RNA and promotes sumoylation of EXOSC10. The cofactor is Mg(2+). Sumoylated by USP36; sumoylation does not significantly affect EXOSC10 nucleolar localization and association with core exosome and USP36, but regulates the nucleolar RNA exosome activity in rRNA processing by promoting binding of EXOSC10 to pre-rRNAs. Effects of sumoylation on EXOSC10 levels vary between different studies. Sumoylation of EXOSC10 is required for the modulation of EXOSC10 effects on cellular protein translation and cell proliferation. Sumoylation is promoted by mild hypothermia. In terms of tissue distribution, expressed in ovary (at protein level). Expressed in testis (at protein level). Expressed in lung (at protein level).

It localises to the cytoplasm. The protein localises to the nucleus. Its subcellular location is the nucleolus. It is found in the nucleoplasm. Catalytic component of the RNA exosome complex which has 3'-&gt;5' exoribonuclease activity and participates in a multitude of cellular RNA processing and degradation events. In the nucleus, the RNA exosome complex is involved in proper maturation of stable RNA species such as rRNA, snRNA and snoRNA, in the elimination of RNA processing by-products and non-coding 'pervasive' transcripts, such as antisense RNA species and promoter-upstream transcripts (PROMPTs), and of mRNAs with processing defects, thereby limiting or excluding their export to the cytoplasm. Part of the small subunit (SSU) processome, first precursor of the small eukaryotic ribosomal subunit. During the assembly of the SSU processome in the nucleolus, many ribosome biogenesis factors, an RNA chaperone and ribosomal proteins associate with the nascent pre-rRNA and work in concert to generate RNA folding, modifications, rearrangements and cleavage as well as targeted degradation of pre-ribosomal RNA by the RNA exosome. The RNA exosome may be involved in Ig class switch recombination (CSR) and/or Ig variable region somatic hypermutation (SHM) by targeting AICDA deamination activity to transcribed dsDNA substrates. In the cytoplasm, the RNA exosome complex is involved in general mRNA turnover and specifically degrades inherently unstable mRNAs containing AU-rich elements (AREs) within their 3' untranslated regions, and in RNA surveillance pathways, preventing translation of aberrant mRNAs. It seems to be involved in degradation of histone mRNA. EXOSC10 is required for nucleolar localization of C1D and probably mediates the association of MTREX, C1D and MPHOSPH6 with the RNA exosome involved in the maturation of 5.8S rRNA. Plays a role in the recruitment of replication protein A complex (RPA) and RAD51 to DNA double-strand breaks caused by irradiation, contributing to DNA repair by homologous recombination. Regulates levels of damage-induced RNAs in order to prevent DNA-RNA hybrid formation at DNA double-strand breaks and limit DNA end resection after damage. Plays a role in oocyte development, maturation and survival. Required for normal testis development and mitotic division of spermatogonia. Plays a role in proper embryo development. Required for global protein translation. Required for cell proliferation. The protein is Exosome complex component 10 (Exosc10) of Mus musculus (Mouse).